A 509-amino-acid chain; its full sequence is MSENLDKSHVDEAGEAEAAASEQGLEGALECSDETLQKKVKSDSPSSQRVGRPHSSPARLVTVEELLETAKGVTNMALAHEIVVTGDFRINAVELAEGSLEKRVKEIVHKAFWDCLSVQLSEEPPTYDHAIKLVGEIKETLLSFLLPGHTRLRNQITEVLDLELIKQEAENGALDISKLAEFIIGMMGILCAPARDEEVKKLKGIKEIVPLFRAIFSVLDLMKVDMANFAISSIRPHLMQQSVEYERRKFQEVLERQPNSLDFATQWLEEATNDLLSQKYKHALPAGGGAAGSGDAPLLTPVSVQNFAYLKLLKWDHFQRPFPETVLMDQSRFQELQLQLEQLAVLGAVLLVTFSTAAPGISGHADFAEKLKMMVKTLLTDMHLPSFHLEDALASIGEKVCLEVSSCLSLCGSSPFSVAKETVLKGQIQALASPEDPIRRIMESRIFTFLETYLASGHQKPLPTVPGGLGPIQKELEEVAVKFVRLVNYNKMVFCPYYDAILSKLLLRS.

Residues 1–12 (MSENLDKSHVDE) are compositionally biased toward basic and acidic residues. Residues 1-57 (MSENLDKSHVDEAGEAEAAASEQGLEGALECSDETLQKKVKSDSPSSQRVGRPHSSP) are disordered. Residues 16 to 30 (AEAAASEQGLEGALE) show a composition bias toward low complexity. Serine 56 carries the phosphoserine modification.

This sequence belongs to the TCP11 family.

The protein is T-complex protein 11-like protein 1 (Tcp11l1) of Mus musculus (Mouse).